A 184-amino-acid chain; its full sequence is Elongation factor P (184 aa).

It belongs to the elongation factor P family.

The protein resides in the cytoplasm. The protein operates within protein biosynthesis; polypeptide chain elongation. Involved in peptide bond synthesis. Stimulates efficient translation and peptide-bond synthesis on native or reconstituted 70S ribosomes in vitro. Probably functions indirectly by altering the affinity of the ribosome for aminoacyl-tRNA, thus increasing their reactivity as acceptors for peptidyl transferase. This is Elongation factor P from Polaromonas sp. (strain JS666 / ATCC BAA-500).